Consider the following 647-residue polypeptide: Acetyl-coenzyme A synthetase (647 aa).

CoA contacts are provided by residues 190-193 and Thr310; that span reads RGGR. Residues 386-388, 410-415, Asp499, and Arg514 each bind ATP; these read GEP and DTWWQT. Ser522 serves as a coordination point for CoA. Arg525 contributes to the ATP binding site. Positions 536, 538, and 541 each coordinate Mg(2+). Residue Arg583 participates in CoA binding. Position 608 is an N6-acetyllysine (Lys608).

It belongs to the ATP-dependent AMP-binding enzyme family. The cofactor is Mg(2+). Acetylated. Deacetylation by the SIR2-homolog deacetylase activates the enzyme.

It catalyses the reaction acetate + ATP + CoA = acetyl-CoA + AMP + diphosphate. In terms of biological role, catalyzes the conversion of acetate into acetyl-CoA (AcCoA), an essential intermediate at the junction of anabolic and catabolic pathways. AcsA undergoes a two-step reaction. In the first half reaction, AcsA combines acetate with ATP to form acetyl-adenylate (AcAMP) intermediate. In the second half reaction, it can then transfer the acetyl group from AcAMP to the sulfhydryl group of CoA, forming the product AcCoA. This is Acetyl-coenzyme A synthetase from Xylella fastidiosa (strain 9a5c).